A 312-amino-acid polypeptide reads, in one-letter code: Pre-mRNA-splicing factor 38A (312 aa).

The tract at residues 1–179 is N-terminal protein interaction domain; sequence MANRTVKDAH…VLEEAEQLEP (179 aa). Phosphoserine occurs at positions 11, 193, 194, 209, and 226. A coiled-coil region spans residues 170-204; that stretch reads VLEEAEQLEPRVSALEEDMDDVESSEEEEEEDEKL. The interval 181 to 312 is disordered; that stretch reads VSALEEDMDD…SHKKSRRGNE (132 aa). A compositionally biased stretch (acidic residues) spans 184-202; it reads LEEDMDDVESSEEEEEEDE. Residues 203–224 show a composition bias toward basic and acidic residues; sequence KLERVPSPDHRRRSYRDLDKPR. Composition is skewed to basic residues over residues 225 to 294 and 301 to 312; these read RSPT…RSHS and KKSHKKSRRGNE.

It belongs to the PRP38 family. As to quaternary structure, component of the spliceosome B complex. Interacts (via N-terminal interaction domain) with ZMAT2 and MFAP1.

The protein localises to the nucleus. In terms of biological role, involved in pre-mRNA splicing as a component of the spliceosome. The chain is Pre-mRNA-splicing factor 38A (PRPF38A) from Bos taurus (Bovine).